The primary structure comprises 188 residues: Phosphatidylcholine-sterol acyltransferase (188 aa).

Asn-20 is a glycosylation site (N-linked (GlcNAc...) asparagine). The active-site Charge relay system is the His-169.

It belongs to the AB hydrolase superfamily. Lipase family. Detected in blood plasma (at protein level).

The protein localises to the secreted. The enzyme catalyses a sterol + a 1,2-diacyl-sn-glycero-3-phosphocholine = a sterol ester + a 1-acyl-sn-glycero-3-phosphocholine. It catalyses the reaction a 1-O-alkyl-2-acetyl-sn-glycero-3-phosphocholine + H2O = a 1-O-alkyl-sn-glycero-3-phosphocholine + acetate + H(+). It carries out the reaction a 1-hexadecanoyl-2-acyl-sn-glycero-3-phosphocholine + (24S)-hydroxycholesterol = (24S)-24-hydroxycholesterol ester + 1-hexadecanoyl-sn-glycero-3-phosphocholine. The catalysed reaction is (24S)-hydroxycholesterol + 1-hexadecanoyl-2-(9Z,12Z-octadecadienoyl)-sn-glycero-3-phosphocholine = (24S)-hydroxycholesterol 3-linoleoate + 1-hexadecanoyl-sn-glycero-3-phosphocholine. The enzyme catalyses 1-hexadecanoyl-2-(5Z,8Z,11Z,14Z-eicosatetraenoyl)-sn-glycero-3-phosphocholine + cholesterol = cholesteryl (5Z,8Z,11Z,14Z)-eicosatetraenoate + 1-hexadecanoyl-sn-glycero-3-phosphocholine. It catalyses the reaction 1-hexadecanoyl-2-(9Z-octadecenoyl)-sn-glycero-3-phosphocholine + cholesterol = cholesteryl (9Z-octadecenoate) + 1-hexadecanoyl-sn-glycero-3-phosphocholine. It carries out the reaction 1-hexadecanoyl-2-(8Z,11Z,14Z-eicosatrienoyl)-sn-glycero-3-phosphocholine + cholesterol = cholesteryl (8Z,11Z,14Z)-eicosatrienoate + 1-hexadecanoyl-sn-glycero-3-phosphocholine. The catalysed reaction is 1-hexadecanoyl-2-(5Z,8Z,11Z-eicosatrienoyl)-sn-glycero-3-phosphocholine + cholesterol = cholesteryl (5Z,8Z,11Z)-eicosatrienoate + 1-hexadecanoyl-sn-glycero-3-phosphocholine. The enzyme catalyses 1-hexadecanoyl-2-(5Z,8Z,11Z,14Z,17Z-eicosapentaenoyl)-sn-glycero-3-phosphocholine + cholesterol = (5Z,8Z,11Z,14Z,17Z-eicosapentaenoyl)-cholesterol + 1-hexadecanoyl-sn-glycero-3-phosphocholine. It catalyses the reaction 1-hexadecanoyl-2-(9Z,12Z-octadecadienoyl)-sn-glycero-3-phosphocholine + cholesterol = cholesteryl (9Z,12Z)-octadecadienoate + 1-hexadecanoyl-sn-glycero-3-phosphocholine. It carries out the reaction 1-hexadecanoyl-2-(6Z,9Z,12Z-octadecatrienoyl)-sn-glycero-3-phosphocholine + cholesterol = (6Z,9Z,12Z-octadecatrienoyl)-cholesterol + 1-hexadecanoyl-sn-glycero-3-phosphocholine. The catalysed reaction is 1-hexadecanoyl-2-(11Z,14Z,17Z-eicosatrienoyl)-sn-glycero-3-phosphocholine + cholesterol = (11Z,14Z,17Z-eicosatrienoyl)-cholesterol + 1-hexadecanoyl-sn-glycero-3-phosphocholine. The enzyme catalyses 1-hexadecanoyl-2-(9Z,12Z,15Z-octadecatrienoyl)-sn-glycero-3-phosphocholine + cholesterol = (9Z,12Z,15Z-octadecatrienoyl)-cholesterol + 1-hexadecanoyl-sn-glycero-3-phosphocholine. It catalyses the reaction 1-hexadecanoyl-2-(9Z,12Z-octadecadienoyl)-sn-glycero-3-phosphocholine + H2O = (9Z,12Z)-octadecadienoate + 1-hexadecanoyl-sn-glycero-3-phosphocholine + H(+). It carries out the reaction 1-hexadecanoyl-2-(5Z,8Z,11Z,14Z-eicosatetraenoyl)-sn-glycero-3-phosphocholine + H2O = 1-hexadecanoyl-sn-glycero-3-phosphocholine + (5Z,8Z,11Z,14Z)-eicosatetraenoate + H(+). The catalysed reaction is a 1-O-alkyl-2-acetyl-sn-glycero-3-phosphocholine + 1-hexadecanoyl-sn-glycero-3-phosphocholine = 1-hexadecanoyl-2-acetyl-sn-glycero-3-phosphocholine + a 1-O-alkyl-sn-glycero-3-phosphocholine. Its function is as follows. Central enzyme in the extracellular metabolism of plasma lipoproteins. Synthesized mainly in the liver and secreted into plasma where it converts cholesterol and phosphatidylcholines (lecithins) to cholesteryl esters and lysophosphatidylcholines on the surface of high and low density lipoproteins (HDLs and LDLs). The cholesterol ester is then transported back to the liver. Also produced in the brain by primary astrocytes, and esterifies free cholesterol on nascent APOE-containing lipoproteins secreted from glia and influences cerebral spinal fluid (CSF) APOE- and APOA1 levels. Together with APOE and the cholesterol transporter ABCA1, plays a key role in the maturation of glial-derived, nascent lipoproteins. Required for remodeling high-density lipoprotein particles into their spherical forms. Has a preference for plasma 16:0-18:2 or 18:O-18:2 phosphatidylcholines. Catalyzes the hydrolysis of 1-O-alkyl-2-acetyl-sn-glycero-3-phosphocholine (platelet-activating factor or PAF) to 1-O-alkyl-sn-glycero-3-phosphocholine (lyso-PAF). Also catalyzes the transfer of the acetate group from PAF to 1-hexadecanoyl-sn-glycero-3-phosphocholine forming lyso-PAF. Catalyzes the esterification of (24S)-hydroxycholesterol (24(S)OH-C), also known as cerebrosterol to produce 24(S)OH-C monoesters. This chain is Phosphatidylcholine-sterol acyltransferase (LCAT), found in Sus scrofa (Pig).